We begin with the raw amino-acid sequence, 286 residues long: Transcription factor bHLH11 (286 aa).

Positions 1-34 are disordered; it reads MDQPMKPKTCSESDFADDSSASSSSSSGQNLRGA. Over residues 18–27 the composition is skewed to low complexity; sequence DSSASSSSSS. Positions 44–94 constitute a bHLH domain; the sequence is AVCSQKAEREKLRRDKLKEQFLELGNALDPNRPKSDKASVLTDTIQMLKDV. Disordered regions lie at residues 182–202 and 244–286; these read EQQA…MKQD and QQDV…MLKP. Composition is skewed to low complexity over residues 183–198 and 255–269; these read QQAS…ADAS and SLTT…YSLS. Positions 270–279 are enriched in polar residues; the sequence is QAVQDSSPGT.

Homodimer. Expressed consitutively in roots, leaves, stems, and flowers.

It localises to the nucleus. The chain is Transcription factor bHLH11 (BHLH11) from Arabidopsis thaliana (Mouse-ear cress).